The chain runs to 506 residues: Acetylcholine receptor subunit gamma (506 aa).

The first 17 residues, 1 to 17, serve as a signal peptide directing secretion; that stretch reads MVLTLLLIICLALEVRS. The Extracellular portion of the chain corresponds to 18-235; the sequence is ENEEGRLIEK…IIFFLIIQRK (218 aa). Residue asparagine 85 is glycosylated (N-linked (GlcNAc...) asparagine). A disulfide bond links cysteine 145 and cysteine 159. Transmembrane regions (helical) follow at residues 236 to 260, 269 to 287, and 303 to 324; these read PLFY…VYFL, CTLS…FLIA, and YLIF…VLNV. Residues 325-466 are Cytoplasmic-facing; the sequence is SLRTPNTHSL…WVLIGKVIDK (142 aa). At tyrosine 381 the chain carries Phosphotyrosine; by Tyr-kinases. A helical membrane pass occupies residues 467–490; sequence ACFWIALLLFSIGTLAIFLTGHFN.

The protein belongs to the ligand-gated ion channel (TC 1.A.9) family. Acetylcholine receptor (TC 1.A.9.1) subfamily. Gamma/CHRNG sub-subfamily. As to quaternary structure, pentamer of two alpha chains, and one each of the beta, delta, and gamma chains. Seems not to be glycosylated on Asn-158.

It localises to the postsynaptic cell membrane. The protein resides in the cell membrane. The catalysed reaction is K(+)(in) = K(+)(out). The enzyme catalyses Na(+)(in) = Na(+)(out). In terms of biological role, after binding acetylcholine, the AChR responds by an extensive change in conformation that affects all subunits and leads to opening of an ion-conducting channel across the plasma membrane. This chain is Acetylcholine receptor subunit gamma (CHRNG), found in Tetronarce californica (Pacific electric ray).